The primary structure comprises 729 residues: FYN-binding protein 2 (729 aa).

Disordered regions lie at residues 18 to 130 (KFNA…EEKG), 170 to 320 (EGQK…SAEL), 371 to 408 (ELSP…PPKV), and 469 to 490 (VTKE…KTYD). 4 stretches are compositionally biased toward polar residues: residues 69–81 (GVSQ…TLKS), 89–99 (KTSSSSGTPEK), 190–216 (GAQT…SSVS), and 226–240 (KSPA…SQCQ). Pro residues predominate over residues 275-284 (GPPPPKPSKP). Residues 374–402 (PRPKEEENTMEEKESWESEPLEPRKELHP) are compositionally biased toward basic and acidic residues. The segment covering 473 to 485 (TPSPSTIRSSSSS) has biased composition (low complexity). Position 489 is a phosphotyrosine (tyrosine 489). The SH2-binding; to LCP2 motif lies at 520 to 523 (YEDI). Residues 576–603 (DLGPRSQDDSQDGIIYDDVDTREKESND) form a disordered region. Over residues 584–593 (DSQDGIIYDD) the composition is skewed to acidic residues. A Phosphotyrosine modification is found at tyrosine 591. Residues 594–603 (VDTREKESND) are compositionally biased toward basic and acidic residues. Residues 668-728 (LVINRAVACA…LVEHLDFKHQ (61 aa)) form the SH3 domain.

In terms of assembly, interacts with SKAP1, LCK and FYN. The phosphorylated form interacts with LCP2. Phosphorylation is required for its function in T-cell activation.

It localises to the membrane raft. Adapter protein that plays a role in T-cell receptor (TCR)-mediated activation of signaling pathways. Required for T-cell activation and integrin-mediated T-cell adhesion in response to TCR stimulation. The polypeptide is FYN-binding protein 2 (Mus musculus (Mouse)).